The chain runs to 468 residues: ATP synthase subunit beta 3 (468 aa).

155–162 provides a ligand contact to ATP; that stretch reads GGAGVGKT.

This sequence belongs to the ATPase alpha/beta chains family. As to quaternary structure, F-type ATPases have 2 components, CF(1) - the catalytic core - and CF(0) - the membrane proton channel. CF(1) has five subunits: alpha(3), beta(3), gamma(1), delta(1), epsilon(1). CF(0) has three main subunits: a(1), b(2) and c(9-12). The alpha and beta chains form an alternating ring which encloses part of the gamma chain. CF(1) is attached to CF(0) by a central stalk formed by the gamma and epsilon chains, while a peripheral stalk is formed by the delta and b chains.

The protein localises to the cell inner membrane. The enzyme catalyses ATP + H2O + 4 H(+)(in) = ADP + phosphate + 5 H(+)(out). In terms of biological role, produces ATP from ADP in the presence of a proton gradient across the membrane. The catalytic sites are hosted primarily by the beta subunits. The polypeptide is ATP synthase subunit beta 3 (Syntrophotalea carbinolica (strain DSM 2380 / NBRC 103641 / GraBd1) (Pelobacter carbinolicus)).